A 242-amino-acid polypeptide reads, in one-letter code: Segregation and condensation protein A (242 aa).

It belongs to the ScpA family. Component of a cohesin-like complex composed of ScpA, ScpB and the Smc homodimer, in which ScpA and ScpB bind to the head domain of Smc. The presence of the three proteins is required for the association of the complex with DNA.

Its subcellular location is the cytoplasm. Participates in chromosomal partition during cell division. May act via the formation of a condensin-like complex containing Smc and ScpB that pull DNA away from mid-cell into both cell halves. The chain is Segregation and condensation protein A from Streptococcus pneumoniae serotype 4 (strain ATCC BAA-334 / TIGR4).